Consider the following 736-residue polypeptide: Elongation factor 2 (736 aa).

The region spanning Thr-18 to Val-262 is the tr-type G domain. GTP is bound by residues Ala-27–Thr-34, Asp-93–His-97, and Asn-147–Asp-150. His-603 is subject to Diphthamide.

The protein belongs to the TRAFAC class translation factor GTPase superfamily. Classic translation factor GTPase family. EF-G/EF-2 subfamily.

The protein localises to the cytoplasm. Its function is as follows. Catalyzes the GTP-dependent ribosomal translocation step during translation elongation. During this step, the ribosome changes from the pre-translocational (PRE) to the post-translocational (POST) state as the newly formed A-site-bound peptidyl-tRNA and P-site-bound deacylated tRNA move to the P and E sites, respectively. Catalyzes the coordinated movement of the two tRNA molecules, the mRNA and conformational changes in the ribosome. In Metallosphaera sedula (strain ATCC 51363 / DSM 5348 / JCM 9185 / NBRC 15509 / TH2), this protein is Elongation factor 2.